Consider the following 234-residue polypeptide: MLTYETWEENDVSFSEEDETKGALSVLSWAYKEYENEIVYACSFGVEGMVLLHLINQVNPSAKVVFLDTNVHFQETYELIQKVRERFPSLNIIEKQPKLTLDEQAKLHGNKLWESNPNLCCKIRKILPLEESLANEKAWISGLRREQSETRKHTKFINQDHRFQSIKVCPLIHWTWKEVWRYVYKHSLPYNPLHDIGYPSIGCEKCTLPVGEGGDSRDGRWAGKVKTECGLHYQ.

Residues Cys120, Cys121, Cys203, and Cys206 each contribute to the [4Fe-4S] cluster site. The Nucleophile; cysteine thiosulfonate intermediate role is filled by Cys229.

The protein belongs to the PAPS reductase family. CysH subfamily. The cofactor is [4Fe-4S] cluster.

The protein resides in the cytoplasm. The enzyme catalyses [thioredoxin]-disulfide + sulfite + AMP + 2 H(+) = adenosine 5'-phosphosulfate + [thioredoxin]-dithiol. It participates in sulfur metabolism; hydrogen sulfide biosynthesis; sulfite from sulfate. Functionally, catalyzes the formation of sulfite from adenosine 5'-phosphosulfate (APS) using thioredoxin as an electron donor. In Bacillus cereus (strain AH187), this protein is Adenosine 5'-phosphosulfate reductase.